A 512-amino-acid polypeptide reads, in one-letter code: DNA damage-binding protein CMR1 (512 aa).

Residues S32–L96 are disordered. Residues I34–D46 are compositionally biased toward basic and acidic residues. Over residues R47–V60 the composition is skewed to basic residues. WD repeat units follow at residues L189–E230, L241–I281, D289–N329, L333–E373, D390–L429, G442–L481, and P482–T512.

It belongs to the WD repeat DDB2/WDR76 family.

Functionally, DNA-binding protein that binds to both single- and double-stranded DNA. Binds preferentially to UV-damaged DNA. May be involved in DNA-metabolic processes. The chain is DNA damage-binding protein CMR1 from Kluyveromyces lactis (strain ATCC 8585 / CBS 2359 / DSM 70799 / NBRC 1267 / NRRL Y-1140 / WM37) (Yeast).